We begin with the raw amino-acid sequence, 1881 residues long: Nuclear pore membrane glycoprotein 210-like (1881 aa).

An N-terminal signal peptide occupies residues M1–A32. 3 N-linked (GlcNAc...) asparagine glycosylation sites follow: N80, N344, and N808. The BIG2 domain maps to F1078–G1150. An N-linked (GlcNAc...) asparagine glycan is attached at N1441. A helical transmembrane segment spans residues Y1804–A1824.

Belongs to the NUP210 family. Expressed in testis.

The protein resides in the nucleus membrane. It localises to the nucleus. It is found in the nucleoplasm. This chain is Nuclear pore membrane glycoprotein 210-like (Nup210l), found in Mus musculus (Mouse).